A 240-amino-acid polypeptide reads, in one-letter code: Uridylate kinase (240 aa).

12–15 is a binding site for ATP; it reads KLSG. The interval 20-25 is involved in allosteric activation by GTP; that stretch reads GEQGNG. G54 provides a ligand contact to UMP. 2 residues coordinate ATP: G55 and R59. UMP-binding positions include D74 and 135 to 142; that span reads TGNPYFST. ATP is bound by residues N163, Y169, and D172.

This sequence belongs to the UMP kinase family. As to quaternary structure, homohexamer.

The protein localises to the cytoplasm. The catalysed reaction is UMP + ATP = UDP + ADP. It participates in pyrimidine metabolism; CTP biosynthesis via de novo pathway; UDP from UMP (UMPK route): step 1/1. With respect to regulation, allosterically activated by GTP. Inhibited by UTP. Functionally, catalyzes the reversible phosphorylation of UMP to UDP. This is Uridylate kinase from Bacillus velezensis (strain DSM 23117 / BGSC 10A6 / LMG 26770 / FZB42) (Bacillus amyloliquefaciens subsp. plantarum).